A 220-amino-acid polypeptide reads, in one-letter code: ATP phosphoribosyltransferase (220 aa).

Belongs to the ATP phosphoribosyltransferase family. Short subfamily. In terms of assembly, heteromultimer composed of HisG and HisZ subunits.

The protein localises to the cytoplasm. It carries out the reaction 1-(5-phospho-beta-D-ribosyl)-ATP + diphosphate = 5-phospho-alpha-D-ribose 1-diphosphate + ATP. It participates in amino-acid biosynthesis; L-histidine biosynthesis; L-histidine from 5-phospho-alpha-D-ribose 1-diphosphate: step 1/9. Its function is as follows. Catalyzes the condensation of ATP and 5-phosphoribose 1-diphosphate to form N'-(5'-phosphoribosyl)-ATP (PR-ATP). Has a crucial role in the pathway because the rate of histidine biosynthesis seems to be controlled primarily by regulation of HisG enzymatic activity. The protein is ATP phosphoribosyltransferase of Prochlorococcus marinus (strain NATL1A).